The chain runs to 757 residues: RNA-directed RNA polymerase catalytic subunit (757 aa).

Residues 52-82 form a disordered region; it reads KGKWTTNTETGAPQLNPIDGPLPEDNEPSGY. Residues 55-64 are compositionally biased toward polar residues; it reads WTTNTETGAP. 2 consecutive short sequence motifs (nuclear localization signal) follow at residues 187–195 and 203–216; these read RKRRVRDNM and RTIG…NKKS. The promoter-binding site stretch occupies residues 249-256; the sequence is RGFVYFVE. The RdRp catalytic domain occupies 286–483; sequence VRKMMTNSQD…GINMSKKKSY (198 aa).

The protein belongs to the influenza viruses polymerase PB1 family. In terms of assembly, influenza RNA polymerase is composed of three subunits: PB1, PB2 and PA. Interacts (via N-terminus) with PA (via C-terminus). Interacts (via C-terminus) with PB2 (via N-terminus); this interaction is essential for transcription initiation. Phosphorylated by host PRKCA.

It localises to the host nucleus. It is found in the host cytoplasm. The catalysed reaction is RNA(n) + a ribonucleoside 5'-triphosphate = RNA(n+1) + diphosphate. RNA-dependent RNA polymerase which is responsible for replication and transcription of virus RNA segments. The transcription of viral mRNAs occurs by a unique mechanism called cap-snatching. 5' methylated caps of cellular mRNAs are cleaved after 10-13 nucleotides by PA. In turn, these short capped RNAs are used as primers by PB1 for transcription of viral mRNAs. During virus replication, PB1 initiates RNA synthesis and copy vRNA into complementary RNA (cRNA) which in turn serves as a template for the production of more vRNAs. This chain is RNA-directed RNA polymerase catalytic subunit, found in Influenza A virus (strain A/Chicken/Shantou/4231/2003 H5N1 genotype V).